A 263-amino-acid chain; its full sequence is Small ribosomal subunit protein eS4 (263 aa).

One can recognise an S4 RNA-binding domain in the interval L42–D104.

It belongs to the eukaryotic ribosomal protein eS4 family.

The sequence is that of Small ribosomal subunit protein eS4 (RPS4Y1) from Gorilla gorilla gorilla (Western lowland gorilla).